The chain runs to 74 residues: DNA-directed RNA polymerase subunit omega (74 aa).

It belongs to the RNA polymerase subunit omega family. The RNAP catalytic core consists of 2 alpha, 1 beta, 1 beta' and 1 omega subunit. When a sigma factor is associated with the core the holoenzyme is formed, which can initiate transcription.

It carries out the reaction RNA(n) + a ribonucleoside 5'-triphosphate = RNA(n+1) + diphosphate. In terms of biological role, promotes RNA polymerase assembly. Latches the N- and C-terminal regions of the beta' subunit thereby facilitating its interaction with the beta and alpha subunits. The polypeptide is DNA-directed RNA polymerase subunit omega (Hydrogenovibrio crunogenus (strain DSM 25203 / XCL-2) (Thiomicrospira crunogena)).